We begin with the raw amino-acid sequence, 337 residues long: WRKY transcription factor 23 (337 aa).

The tract at residues I100–A160 is disordered. Over residues P106–A118 the composition is skewed to low complexity. The span at H142–K155 shows a compositional bias: basic residues. Residues S168–P233 constitute a DNA-binding region (WRKY).

This sequence belongs to the WRKY group II-c family.

The protein localises to the nucleus. In terms of biological role, transcription factor. Interacts specifically with the W box (5'-(T)TGAC[CT]-3'), a frequently occurring elicitor-responsive cis-acting element. In Arabidopsis thaliana (Mouse-ear cress), this protein is WRKY transcription factor 23 (WRKY23).